A 165-amino-acid polypeptide reads, in one-letter code: Transmembrane protein 128 (165 aa).

4 consecutive transmembrane segments (helical) span residues Asn49–Phe69, Trp81–Val101, Leu119–Trp139, and Phe144–Leu164.

It is found in the membrane. In Homo sapiens (Human), this protein is Transmembrane protein 128 (TMEM128).